A 121-amino-acid polypeptide reads, in one-letter code: Cytochrome B5-like protein (121 aa).

A helical membrane pass occupies residues 1 to 21; sequence MIAVIGLLLGFLVSALFLIQG. Residues 24 to 49 form a disordered region; that stretch reads RRTNDNQEKKRSSSEPVEDVVRPKSY. Residues 26–36 show a composition bias toward basic and acidic residues; that stretch reads TNDNQEKKRSS. The 76-residue stretch at 46 to 121 folds into the Cytochrome b5 heme-binding domain; the sequence is PKSYSKSEVA…IEDFYIGELH (76 aa). His-81 and His-104 together coordinate heme.

Belongs to the cytochrome b5 family.

Its subcellular location is the membrane. The sequence is that of Cytochrome B5-like protein from Arabidopsis thaliana (Mouse-ear cress).